Consider the following 249-residue polypeptide: Proteasome activator complex subunit 1 (249 aa).

The segment at 60 to 102 is disordered; the sequence is PLDIPVPDPVKEKEKEERKKQQEKEDKDEKKKGEDEDKGPPCG. The segment covering 68-98 has biased composition (basic and acidic residues); the sequence is PVKEKEKEERKKQQEKEDKDEKKKGEDEDKG.

It belongs to the PA28 family. Heterodimer of PSME1 and PSME2, which forms a hexameric ring. PSME1 can form homoheptamers.

Implicated in immunoproteasome assembly and required for efficient antigen processing. The PA28 activator complex enhances the generation of class I binding peptides by altering the cleavage pattern of the proteasome. The chain is Proteasome activator complex subunit 1 (PSME1) from Homo sapiens (Human).